The primary structure comprises 126 residues: Protein ApaG (126 aa).

Residues 2-126 (SDPRYQVDVS…FRLAVPGALH (125 aa)) form the ApaG domain.

This Pseudomonas fluorescens (strain ATCC BAA-477 / NRRL B-23932 / Pf-5) protein is Protein ApaG.